Consider the following 585-residue polypeptide: Probable ubiquitin carboxyl-terminal hydrolase 9 (585 aa).

The segment at 1 to 23 (MSLLRWMGMNSPGSTDRRKSTWE) is disordered. In terms of domain architecture, USP spans 41 to 424 (YGLTNYGNTC…TAYVLFYTAA (384 aa)). Residue C50 is the Nucleophile of the active site. The segment at 85–110 (CTKTNHPESSSSRHSKKKSMENRKSS) is disordered. The active-site Proton acceptor is the H375. Polar residues predominate over residues 447-470 (SQLKQESVEVSNLSSTPRSNSTIT). The interval 447 to 473 (SQLKQESVEVSNLSSTPRSNSTITYPD) is disordered. Position 505 is a phosphoserine (S505). Disordered stretches follow at residues 511–530 (FHSR…SRSF) and 540–585 (KFFG…RSKR). Residues 542-551 (FGSSQSNSPK) show a composition bias toward polar residues. At S549 the chain carries Phosphoserine. The segment covering 553–570 (SPLRDTHKSSDEHSESKH) has biased composition (basic and acidic residues). Residues 574–585 (LPWQFSRSRSKR) are compositionally biased toward polar residues.

This sequence belongs to the peptidase C19 family. Interacts with bun107 and bun62.

The protein resides in the nucleus. It localises to the cytoplasm. It is found in the cell tip. The enzyme catalyses Thiol-dependent hydrolysis of ester, thioester, amide, peptide and isopeptide bonds formed by the C-terminal Gly of ubiquitin (a 76-residue protein attached to proteins as an intracellular targeting signal).. In terms of biological role, ubiquitin C-terminal hydrolase involved in regulating actin dynamics and/or endocytosis at cell tips and septa. In Schizosaccharomyces pombe (strain 972 / ATCC 24843) (Fission yeast), this protein is Probable ubiquitin carboxyl-terminal hydrolase 9 (ubp9).